Here is a 426-residue protein sequence, read N- to C-terminus: Enolase (426 aa).

Residues 38–60 (PSGASTGAHEAVEKRDGDKSRYG) are disordered. Over residues 47–58 (EAVEKRDGDKSR) the composition is skewed to basic and acidic residues. Glutamine 163 lines the (2R)-2-phosphoglycerate pocket. The Proton donor role is filled by glutamate 205. Mg(2+) is bound by residues aspartate 242, glutamate 285, and aspartate 312. The (2R)-2-phosphoglycerate site is built by lysine 337, arginine 366, serine 367, and lysine 388. The active-site Proton acceptor is the lysine 337.

Belongs to the enolase family. Requires Mg(2+) as cofactor.

Its subcellular location is the cytoplasm. The protein localises to the secreted. It is found in the cell surface. The enzyme catalyses (2R)-2-phosphoglycerate = phosphoenolpyruvate + H2O. The protein operates within carbohydrate degradation; glycolysis; pyruvate from D-glyceraldehyde 3-phosphate: step 4/5. Catalyzes the reversible conversion of 2-phosphoglycerate (2-PG) into phosphoenolpyruvate (PEP). It is essential for the degradation of carbohydrates via glycolysis. This Caulobacter sp. (strain K31) protein is Enolase.